A 255-amino-acid polypeptide reads, in one-letter code: Aliphatic sulfonates import ATP-binding protein SsuB (255 aa).

One can recognise an ABC transporter domain in the interval 12–233; it reads LLLNAVSKHY…RLGSVRLAEL (222 aa). 44–51 lines the ATP pocket; that stretch reads GRSGGGKS.

This sequence belongs to the ABC transporter superfamily. Aliphatic sulfonates importer (TC 3.A.1.17.2) family. In terms of assembly, the complex is composed of two ATP-binding proteins (SsuB), two transmembrane proteins (SsuC) and a solute-binding protein (SsuA).

It localises to the cell inner membrane. The enzyme catalyses ATP + H2O + aliphatic sulfonate-[sulfonate-binding protein]Side 1 = ADP + phosphate + aliphatic sulfonateSide 2 + [sulfonate-binding protein]Side 1.. In terms of biological role, part of the ABC transporter complex SsuABC involved in aliphatic sulfonates import. Responsible for energy coupling to the transport system. This chain is Aliphatic sulfonates import ATP-binding protein SsuB, found in Shigella flexneri serotype 5b (strain 8401).